The primary structure comprises 302 residues: Ornithine carbamoyltransferase (302 aa).

Residues 52–55 (STRT), Gln-79, Arg-103, and 130–133 (HPCQ) contribute to the carbamoyl phosphate site. L-ornithine is bound by residues Asn-161, Asp-221, and 225-226 (SM). Carbamoyl phosphate-binding positions include 261-262 (CL) and Arg-289.

It belongs to the aspartate/ornithine carbamoyltransferase superfamily. OTCase family.

The protein resides in the cytoplasm. It catalyses the reaction carbamoyl phosphate + L-ornithine = L-citrulline + phosphate + H(+). It functions in the pathway amino-acid biosynthesis; L-arginine biosynthesis; L-arginine from L-ornithine and carbamoyl phosphate: step 1/3. Its function is as follows. Reversibly catalyzes the transfer of the carbamoyl group from carbamoyl phosphate (CP) to the N(epsilon) atom of ornithine (ORN) to produce L-citrulline. This is Ornithine carbamoyltransferase from Methanospirillum hungatei JF-1 (strain ATCC 27890 / DSM 864 / NBRC 100397 / JF-1).